A 52-amino-acid chain; its full sequence is Large ribosomal subunit protein bL32c (52 aa).

Belongs to the bacterial ribosomal protein bL32 family.

Its subcellular location is the plastid. The protein localises to the chloroplast. This is Large ribosomal subunit protein bL32c from Citrus sinensis (Sweet orange).